The following is a 297-amino-acid chain: Phosphoribosylaminoimidazole-succinocarboxamide synthase (297 aa).

It belongs to the SAICAR synthetase family.

It catalyses the reaction 5-amino-1-(5-phospho-D-ribosyl)imidazole-4-carboxylate + L-aspartate + ATP = (2S)-2-[5-amino-1-(5-phospho-beta-D-ribosyl)imidazole-4-carboxamido]succinate + ADP + phosphate + 2 H(+). It participates in purine metabolism; IMP biosynthesis via de novo pathway; 5-amino-1-(5-phospho-D-ribosyl)imidazole-4-carboxamide from 5-amino-1-(5-phospho-D-ribosyl)imidazole-4-carboxylate: step 1/2. This Corynebacterium glutamicum (strain ATCC 13032 / DSM 20300 / JCM 1318 / BCRC 11384 / CCUG 27702 / LMG 3730 / NBRC 12168 / NCIMB 10025 / NRRL B-2784 / 534) protein is Phosphoribosylaminoimidazole-succinocarboxamide synthase.